We begin with the raw amino-acid sequence, 444 residues long: Protein-serine O-palmitoleoyltransferase porcupine (444 aa).

A run of 10 helical transmembrane segments spans residues 29-49, 81-101, 128-150, 163-183, 201-221, 249-269, 304-324, 326-346, 383-403, and 420-440; these read NGTLLTLLQMLVLVWMFFLVW, VMIFHTFSLISLFCAVQKLNG, FLTLRGVLMMHIMRLSTASFAIV, TLYLEYIYFPPFIIFGPYVTF, LGVFVQGSVLIFIGITLAIIS, YFICLSTQAFAMFLGSKIVVA, FFQSTALNVLLTFAVSALLHA, DYQMWLTLLALGFIAYSETVF, VLIINLFFMILSMYHLVFTGM, and WTIWGTHYYSSFIVSFAFLAL. Histidine 323 is an active-site residue.

Belongs to the membrane-bound acyltransferase family. Porcupine subfamily.

Its subcellular location is the membrane. It carries out the reaction [Wnt protein]-L-serine + (9Z)-hexadecenoyl-CoA = [Wnt protein]-O-(9Z)-hexadecenoyl-L-serine + CoA. Key regulator of the Wnt signaling pathway that mediates lipid modification of Wnt proteins. Acts as a protein-serine O-palmitoleoyltransferase that catalyzes the attachment of palmitoleate, a 16-carbon monounsaturated fatty acid (C16:1(9Z)), to Wnt proteins. Serine palmitoleoylation of WNT proteins is required for efficient binding to frizzled receptors. Has a role in cell specification, specifically in blastomere signaling. Involved in cytosketetal polarity. Required for the orientation of mitotic spindle axis. In Caenorhabditis briggsae, this protein is Protein-serine O-palmitoleoyltransferase porcupine.